Here is a 155-residue protein sequence, read N- to C-terminus: Large-conductance mechanosensitive channel (155 aa).

The next 3 helical transmembrane spans lie at 16–36, 40–60, and 88–108; these read VVDM…VNNL, VILP…LYII, and GVFL…FLLV.

The protein belongs to the MscL family. Homopentamer.

The protein localises to the cell inner membrane. Functionally, channel that opens in response to stretch forces in the membrane lipid bilayer. May participate in the regulation of osmotic pressure changes within the cell. This is Large-conductance mechanosensitive channel from Chlorobium chlorochromatii (strain CaD3).